We begin with the raw amino-acid sequence, 74 residues long: Large ribosomal subunit protein bL31 (74 aa).

Zn(2+) contacts are provided by Cys16, Cys18, Cys38, and Cys41.

Belongs to the bacterial ribosomal protein bL31 family. Type A subfamily. As to quaternary structure, part of the 50S ribosomal subunit. The cofactor is Zn(2+).

Its function is as follows. Binds the 23S rRNA. This Streptomyces coelicolor (strain ATCC BAA-471 / A3(2) / M145) protein is Large ribosomal subunit protein bL31 (rpmE).